A 202-amino-acid polypeptide reads, in one-letter code: 3-isopropylmalate dehydratase small subunit (202 aa).

This sequence belongs to the LeuD family. LeuD type 1 subfamily. In terms of assembly, heterodimer of LeuC and LeuD.

It carries out the reaction (2R,3S)-3-isopropylmalate = (2S)-2-isopropylmalate. It participates in amino-acid biosynthesis; L-leucine biosynthesis; L-leucine from 3-methyl-2-oxobutanoate: step 2/4. In terms of biological role, catalyzes the isomerization between 2-isopropylmalate and 3-isopropylmalate, via the formation of 2-isopropylmaleate. This chain is 3-isopropylmalate dehydratase small subunit, found in Novosphingobium aromaticivorans (strain ATCC 700278 / DSM 12444 / CCUG 56034 / CIP 105152 / NBRC 16084 / F199).